The following is a 150-amino-acid chain: 3-dehydroquinate dehydratase (150 aa).

Y26 (proton acceptor) is an active-site residue. N77, H83, and D90 together coordinate substrate. Residue H103 is the Proton donor of the active site. Residues 104–105 (LS) and R114 contribute to the substrate site.

The protein belongs to the type-II 3-dehydroquinase family. In terms of assembly, homododecamer.

The catalysed reaction is 3-dehydroquinate = 3-dehydroshikimate + H2O. It participates in metabolic intermediate biosynthesis; chorismate biosynthesis; chorismate from D-erythrose 4-phosphate and phosphoenolpyruvate: step 3/7. Its function is as follows. Catalyzes a trans-dehydration via an enolate intermediate. This is 3-dehydroquinate dehydratase from Vibrio cholerae serotype O1 (strain ATCC 39541 / Classical Ogawa 395 / O395).